Here is a 92-residue protein sequence, read N- to C-terminus: MSEANVNKKEKGQKKVRTGYVVSDKMAKTIVVELEDRKQHALYGKIMRRNSRVKAHDEEGLAGVGDRVRIEETRPLSKDKHFRLLDIVEKAR.

The protein belongs to the universal ribosomal protein uS17 family. As to quaternary structure, part of the 30S ribosomal subunit.

Functionally, one of the primary rRNA binding proteins, it binds specifically to the 5'-end of 16S ribosomal RNA. This chain is Small ribosomal subunit protein uS17, found in Corynebacterium urealyticum (strain ATCC 43042 / DSM 7109).